A 174-amino-acid polypeptide reads, in one-letter code: C-type lectin domain family 2 member A (174 aa).

Residues 1-27 (MINPELRDGRADGFIHRIVPKLIQNWK) lie on the Cytoplasmic side of the membrane. The chain crosses the membrane as a helical; Signal-anchor for type II membrane protein span at residues 28–48 (IGLMCFLSIIITTVCIIMIAT). Over 49-174 (WSKHAKPVAC…WICSKPKYFL (126 aa)) the chain is Extracellular. Cys58 and Cys69 form a disulfide bridge. One can recognise a C-type lectin domain in the interval 65-174 (VRDKCFYFSD…WICSKPKYFL (110 aa)). N-linked (GlcNAc...) asparagine glycosylation is found at Asn78, Asn130, and Asn143. Cys86 and Cys167 form a disulfide bridge.

As to quaternary structure, homodimer; non-disulfide-linked. Interacts with KLRB1. Interacts with KLRF2. In terms of processing, N-glycosylated. In terms of tissue distribution, mainly expressed in skin. Also expressed in keratinocytes, spleen, thymus, small intestine, peripheral blood monocytes, bone marrow, ovary, testis and skin. High expression in CD8(+), B-lymphocytes and naive CD4(+) T-cells. Restricted mostly to proliferating lymphocytes. Not detected in myeloid leukocytes or natural killer (NK) cells.

Its subcellular location is the cell membrane. Membrane-bound protein expressed mainly on keratinocytes which acts as a ligand to stimulate the activating receptor NKp65/KLRF2, expressed on the surface of natural killer (NK) cells. Facilitates thereby dedicated immune recognition of keratinocytes leading to natural killer cell mediated cytotoxicity. Also plays a role in modulating the extent of T-cell expansion. The protein is C-type lectin domain family 2 member A (CLEC2A) of Homo sapiens (Human).